A 251-amino-acid polypeptide reads, in one-letter code: Small ribosomal subunit protein uS2 (251 aa).

This sequence belongs to the universal ribosomal protein uS2 family.

The polypeptide is Small ribosomal subunit protein uS2 (Novosphingobium aromaticivorans (strain ATCC 700278 / DSM 12444 / CCUG 56034 / CIP 105152 / NBRC 16084 / F199)).